Consider the following 1212-residue polypeptide: Probable serine/threonine-protein kinase DDB_G0284491 (1212 aa).

Residues 197–217 (LFHSFSLLNLYVYLIIVIRII) form a helical membrane-spanning segment. N229, N299, N309, N328, N335, N341, N344, N391, N419, N422, N426, N427, N435, and N499 each carry an N-linked (GlcNAc...) asparagine glycan. Residues 288–329 (LNNNNDNNLNNNNSNNNLNNNNNSNSNFNNDNNLNSNINSND) are disordered. Disordered regions lie at residues 412 to 439 (GNSN…NSGG) and 489 to 517 (IIKN…DYEE). Residues 489–507 (IIKNNNNNNNNNSNNNNNN) show a composition bias toward low complexity. The span at 508-517 (NDEDDSDYEE) shows a compositional bias: acidic residues. A helical transmembrane segment spans residues 673 to 693 (IQIFDDYSLIIALRLLMNFIL). Over residues 703–720 (VPPPPTQPSSRPQSPPTV) the composition is skewed to pro residues. 2 disordered regions span residues 703–733 (VPPP…HHSG) and 751–813 (EVVS…NNNN). Positions 865–1182 (ETEIEPFASG…EVYNDLQDIY (318 aa)) constitute a Protein kinase domain. ATP-binding positions include 871 to 879 (FASGGQANI) and K924. The Proton acceptor role is filled by D1035.

It belongs to the protein kinase superfamily. Ser/Thr protein kinase family.

It is found in the membrane. It carries out the reaction L-seryl-[protein] + ATP = O-phospho-L-seryl-[protein] + ADP + H(+). The enzyme catalyses L-threonyl-[protein] + ATP = O-phospho-L-threonyl-[protein] + ADP + H(+). This is Probable serine/threonine-protein kinase DDB_G0284491 from Dictyostelium discoideum (Social amoeba).